The primary structure comprises 141 residues: Putative antiporter subunit mnhB2 (141 aa).

4 helical membrane-spanning segments follow: residues 10-30 (SVTKIVVFILLTFGFYVFFAG), 35-55 (GGGFIGGLIFSSAFILMFLAF), 70-90 (KLMIIGSLISVATASVPMFFG), and 116-136 (LFELGILLTVVGVIVTVMLSI).

Belongs to the CPA3 antiporters (TC 2.A.63) subunit B family. As to quaternary structure, may form a heterooligomeric complex that consists of seven subunits: mnhA2, mnhB2, mnhC2, mnhD2, mnhE2, mnhF2 and mnhG2.

It localises to the cell membrane. This is Putative antiporter subunit mnhB2 (mnhB2) from Staphylococcus epidermidis (strain ATCC 35984 / DSM 28319 / BCRC 17069 / CCUG 31568 / BM 3577 / RP62A).